Consider the following 340-residue polypeptide: Mitochondrial distribution and morphology protein 12 (340 aa).

The SMP-LTD domain occupies 1–321 (MSIDLDWDGM…WPSWIKVSME (321 aa)). 3 disordered regions span residues 79–107 (HYLP…TNPI), 161–184 (SVRE…EDRE), and 319–340 (SMED…EDEH). The span at 89-106 (QRRSAPSTPHIHTNTTNP) shows a compositional bias: polar residues. Residues 321–340 (EDEDSDDEEGEEEGDQEDEH) are compositionally biased toward acidic residues.

This sequence belongs to the MDM12 family. As to quaternary structure, component of the ER-mitochondria encounter structure (ERMES) or MDM complex, composed of MMM1, MDM10, MDM12 and MDM34. An MMM1 homodimer associates with one molecule of MDM12 on each side in a pairwise head-to-tail manner, and the SMP-LTD domains of MMM1 and MDM12 generate a continuous hydrophobic tunnel for phospholipid trafficking.

The protein localises to the mitochondrion outer membrane. It localises to the endoplasmic reticulum membrane. Component of the ERMES/MDM complex, which serves as a molecular tether to connect the endoplasmic reticulum (ER) and mitochondria. Components of this complex are involved in the control of mitochondrial shape and protein biogenesis, and function in nonvesicular lipid trafficking between the ER and mitochondria. MDM12 is required for the interaction of the ER-resident membrane protein MMM1 and the outer mitochondrial membrane-resident beta-barrel protein MDM10. The MDM12-MMM1 subcomplex functions in the major beta-barrel assembly pathway that is responsible for biogenesis of all mitochondrial outer membrane beta-barrel proteins, and acts in a late step after the SAM complex. The MDM10-MDM12-MMM1 subcomplex further acts in the TOM40-specific pathway after the action of the MDM12-MMM1 complex. Essential for establishing and maintaining the structure of mitochondria and maintenance of mtDNA nucleoids. The sequence is that of Mitochondrial distribution and morphology protein 12 from Yarrowia lipolytica (strain CLIB 122 / E 150) (Yeast).